Consider the following 38-residue polypeptide: Exendin-1 (38 aa).

O-linked (HexNAc...) serine; in Exendin-1 and Exendin-1b glycosylation occurs at S32.

Belongs to the glucagon family. O-linked glycan consists of Hex-HexNAc saccharide. In terms of processing, glycosylation may be of interest for the biological stability of exendin-1 and exendin-1b. Expressed by the venom gland.

The protein localises to the secreted. Its function is as follows. O-linked and free exendin-1 and exendin-1b have vasoactive intestinal peptide(VIP)/secretin-like biological activities. They interact with rat and human VIP receptors 1 (VIPR1) and 2 (VIPR2), with the highest affinity for the human VIPR2. They induce hypotension that is mediated by relaxation of cardiac smooth muscle. The chain is Exendin-1 from Heloderma horridum horridum (Mexican beaded lizard).